Reading from the N-terminus, the 484-residue chain is GDP-mannose transporter (484 aa).

2 stretches are compositionally biased toward basic and acidic residues: residues 1–12 (MSMTTSRERNVP) and 19–28 (ELGRSRHSDV). A disordered region spans residues 1–34 (MSMTTSRERNVPPDDNEIELGRSRHSDVAPESES). Over 1–60 (MSMTTSRERNVPPDDNEIELGRSRHSDVAPESESPQAHLLNSDVASVTKNFMRNASHATA) the chain is Cytoplasmic. Residues 61–81 (NSGAIAAVLSYCIASISMTVI) form a helical membrane-spanning segment. Over 82 to 90 (NKFTVSGEK) the chain is Lumenal. A helical transmembrane segment spans residues 91 to 111 (FTMNLLVLLCQCSVGVAMVYA). Residues 112 to 129 (AKCMGWIQIRTLNMRDVK) are Cytoplasmic-facing. A helical transmembrane segment spans residues 130-150 (TWFPISTMLVFVIYTGSKALQ). At 151 to 155 (HMDIP) the chain is on the lumenal side. Residues 156–176 (IYTIFKNLTIILIAYGELLWF) traverse the membrane as a helical segment. Topologically, residues 177–179 (NGR) are cytoplasmic. The helical transmembrane segment at 180–200 (ITPMVFLSFILMVLSSIIAAW) threads the bilayer. Over 201 to 287 (PDLAPSTAKT…ASSSTLSSWS (87 aa)) the chain is Lumenal. Residues 288–308 (TNGYVWMLANCMISATYVLVM) traverse the membrane as a helical segment. Residues 309–321 (RKRIKLTGFKDWD) lie on the Cytoplasmic side of the membrane. Residues 322 to 342 (TMFYNNLLSIPVLLFMSLLVE) form a helical membrane-spanning segment. A glycan (N-linked (GlcNAc...) asparagine) is linked at N343. Residues 343–360 (NWSVETFEHNFPREKRST) lie on the Lumenal side of the membrane. The chain crosses the membrane as a helical span at residues 361 to 381 (LVFAILLSGTGGVFISYTTAW). Residues 382–390 (CIRVTSSTT) are Cytoplasmic-facing. Residues 391-411 (YSMVGALNKLPLALSGMLFFG) form a helical membrane-spanning segment. Over 412–413 (NP) the chain is Lumenal. The chain crosses the membrane as a helical span at residues 414-434 (VTPYNSIGVAVGFIAGIVYAV). The Cytoplasmic segment spans residues 435-484 (GKYKQVVAARIANSDATGASTSLSSSSSAAPSGEYVFDLKGEIPTHTRQQ).

Belongs to the TPT transporter family. SLC35D subfamily. As to quaternary structure, homooligomer.

It localises to the golgi apparatus membrane. Its subcellular location is the cytoplasmic vesicle membrane. The protein localises to the endoplasmic reticulum membrane. Its function is as follows. Involved in the import of GDP-mannose from the cytoplasm into the Golgi lumen. The protein is GDP-mannose transporter (VRG4) of Malassezia globosa (strain ATCC MYA-4612 / CBS 7966) (Dandruff-associated fungus).